The sequence spans 199 residues: Probable thymidylate kinase (199 aa).

An ATP-binding site is contributed by 7-14 (GLDGSGKT).

The protein belongs to the thymidylate kinase family.

The catalysed reaction is dTMP + ATP = dTDP + ADP. The chain is Probable thymidylate kinase from Halobacterium salinarum (strain ATCC 29341 / DSM 671 / R1).